The following is a 456-amino-acid chain: Probable tRNA(Ile)-lysidine synthase (456 aa).

30–35 lines the ATP pocket; the sequence is SGGVDS.

Belongs to the tRNA(Ile)-lysidine synthase family.

It is found in the cytoplasm. The enzyme catalyses cytidine(34) in tRNA(Ile2) + L-lysine + ATP = lysidine(34) in tRNA(Ile2) + AMP + diphosphate + H(+). Its function is as follows. Ligates lysine onto the cytidine present at position 34 of the AUA codon-specific tRNA(Ile) that contains the anticodon CAU, in an ATP-dependent manner. Cytidine is converted to lysidine, thus changing the amino acid specificity of the tRNA from methionine to isoleucine. This Schizosaccharomyces pombe (strain 972 / ATCC 24843) (Fission yeast) protein is Probable tRNA(Ile)-lysidine synthase.